Here is a 309-residue protein sequence, read N- to C-terminus: Probable manganese-dependent inorganic pyrophosphatase (309 aa).

Positions 9, 13, 15, 75, 97, and 149 each coordinate Mn(2+).

This sequence belongs to the PPase class C family. The cofactor is Mn(2+).

Its subcellular location is the cytoplasm. It carries out the reaction diphosphate + H2O = 2 phosphate + H(+). This chain is Probable manganese-dependent inorganic pyrophosphatase, found in Bacillus cereus (strain ATCC 10987 / NRS 248).